The sequence spans 99 residues: MEKRNIRDHKRRLLATKYELRRKLYKAFCNDPALPSDMRDKHRYKLSKLPRNSSFARVRNRCISTGRPRSVYEFFRISRIVFRGLASRGPLMGIKKSSW.

This sequence belongs to the universal ribosomal protein uS14 family.

The protein localises to the mitochondrion. The polypeptide is Small ribosomal subunit protein uS14m (RPS14) (Oenothera berteroana (Bertero's evening primrose)).